The chain runs to 169 residues: MAVLEVLTFPDDRLRTVAKPVKTVTPEIQTFIDDMIETMYDEEGIGLAATQVDFHQRIVVIDVSETRDEPMVLINPVITQKSGDDGIEEGCLSVPGAKGMVPRSAEVSVTALDRDGNEFSFDADDLLAICVQHELDHLEGKLFVDYLSPLKRKRIKEKLEKIKKFNEKN.

Cys91 and His133 together coordinate Fe cation. Glu134 is a catalytic residue. His137 is a binding site for Fe cation.

The protein belongs to the polypeptide deformylase family. It depends on Fe(2+) as a cofactor.

The enzyme catalyses N-terminal N-formyl-L-methionyl-[peptide] + H2O = N-terminal L-methionyl-[peptide] + formate. Removes the formyl group from the N-terminal Met of newly synthesized proteins. Requires at least a dipeptide for an efficient rate of reaction. N-terminal L-methionine is a prerequisite for activity but the enzyme has broad specificity at other positions. The sequence is that of Peptide deformylase from Aliivibrio salmonicida (strain LFI1238) (Vibrio salmonicida (strain LFI1238)).